A 343-amino-acid polypeptide reads, in one-letter code: MSKAYEESGVNIQAGYEAVERITSHVERTLRKEVLGGLGGFGATFDLSQLKMKAPVLVSGTDGVGTKLKLAIDYGKHDTIGIDAVAMCVNDILTTGAEPLYFLDYIATNKVVPSTIEQIVKGISDGCEQTNTALIGGETAEMGEMYHEGEYDIAGFAVGAVEKEDYIDGSNVEEGQAIIGLASSGIHSNGYSLVRKMIKESGVQLHDQFNGQTFLETFLAPTKLYVKPILELKKHIDIKAMSHITGGGFYENIPRALPKGLSAKIDTQSFPTLEVFNWLQKQGNISTNEMYNIFNMGIGYTIIVDKKDVQTTLTTLRAMDTTAYEIGEIIKDDDTPIHLLEVE.

This sequence belongs to the AIR synthase family.

Its subcellular location is the cytoplasm. The enzyme catalyses 2-formamido-N(1)-(5-O-phospho-beta-D-ribosyl)acetamidine + ATP = 5-amino-1-(5-phospho-beta-D-ribosyl)imidazole + ADP + phosphate + H(+). Its pathway is purine metabolism; IMP biosynthesis via de novo pathway; 5-amino-1-(5-phospho-D-ribosyl)imidazole from N(2)-formyl-N(1)-(5-phospho-D-ribosyl)glycinamide: step 2/2. The polypeptide is Phosphoribosylformylglycinamidine cyclo-ligase (Staphylococcus epidermidis (strain ATCC 35984 / DSM 28319 / BCRC 17069 / CCUG 31568 / BM 3577 / RP62A)).